A 104-amino-acid polypeptide reads, in one-letter code: Nucleoid-associated protein Bsph_0039 (104 aa).

Residues 1 to 12 (MRGMGNMQGMMK) are compositionally biased toward low complexity. Positions 1-22 (MRGMGNMQGMMKKMQKMQKEMM) are disordered.

It belongs to the YbaB/EbfC family. In terms of assembly, homodimer.

The protein resides in the cytoplasm. It is found in the nucleoid. In terms of biological role, binds to DNA and alters its conformation. May be involved in regulation of gene expression, nucleoid organization and DNA protection. This chain is Nucleoid-associated protein Bsph_0039, found in Lysinibacillus sphaericus (strain C3-41).